The chain runs to 615 residues: Dehydrogenase str4 (615 aa).

FAD-binding positions include 45-46 (TA), 66-67 (EA), and 123-126 (NGSM). Histidine 552 acts as the Proton acceptor in catalysis. Residues alanine 585 and 596 to 597 (PA) contribute to the FAD site.

Belongs to the GMC oxidoreductase family. In terms of assembly, homodimer. FAD is required as a cofactor.

It participates in mycotoxin biosynthesis. Dehydrogenase; part of the gene cluster that mediates the biosynthesis of strobilurin A, an antifungal polyketide that contains a key beta-methoxyacrylate toxophore that targets the complex III of the mitochondrial electron transport chain. Strobilurin biosynthesis begins with construction of benzoyl CoA by step-wise elimination of ammonia from phenylalanine by the phenylalanine ammonia-lyase str11, oxygenation by str8 and retro-Claisen reaction to form benzoic acid, which is activated to its CoA thiolester benzoyl CoA by the dedicated CoA ligase str10. Benzoyl CoA forms the starter unit for the highly reducing polyketide synthase stpks1 that produces the polyketide prestrobilutin A. The FAD-dependent oxygenase str9 then catalyzes the key oxidative rearrangement responsible for the creation of the beta-methoxyacrylate toxophore. Str9 performs epoxidation of the 2,3 olefin of prestrobilutin A, followed by Meinwald rearrangement to furnish the aldehyde intermediate. Rapid enolization of the aldehyde intermediate would give the beta-methoxyacrylate skeleton and methylations catalyzed by str2 and str3 complete the synthesis and lead to the production of strobilurin A. The short-chain dehydrogenase stl2 and the dehydrogenase str4 play a role in the shunt pathway leading to the production of bolineol. The cluster encodes no obvious halogenase gene that could be involved in production of strobilurin B, nor any obvious dimethylallyl-transferase that could be involved in the production of strobilurin G. It is possible that unknown proteins encoded in, or near, the cluster (such as str1 or stl1) may form new classes of halogenases or dimethylally-transferases, or that the responsible genes are located elsewhere on the genome. Similarly, proteins encoded by str5/str6 hydrolases appear to have no chemical role in the biosynthesis of strobilurin A. Finally, no obvious self-resistance gene is found within the cluster. The sequence is that of Dehydrogenase str4 from Strobilurus tenacellus.